The following is a 162-amino-acid chain: Phosphopantetheine adenylyltransferase (162 aa).

Thr-9 lines the substrate pocket. ATP is bound by residues 9-10 (TF) and His-17. Lys-41, Leu-76, and Arg-90 together coordinate substrate. Residues 91–93 (GLR), Glu-101, and 126–132 (HQAIASR) contribute to the ATP site.

Belongs to the bacterial CoaD family. In terms of assembly, homohexamer. Mg(2+) serves as cofactor.

The protein localises to the cytoplasm. It catalyses the reaction (R)-4'-phosphopantetheine + ATP + H(+) = 3'-dephospho-CoA + diphosphate. Its pathway is cofactor biosynthesis; coenzyme A biosynthesis; CoA from (R)-pantothenate: step 4/5. Its function is as follows. Reversibly transfers an adenylyl group from ATP to 4'-phosphopantetheine, yielding dephospho-CoA (dPCoA) and pyrophosphate. The protein is Phosphopantetheine adenylyltransferase of Caulobacter sp. (strain K31).